The primary structure comprises 616 residues: Ectonucleoside triphosphate diphosphohydrolase 4 (616 aa).

Residues 1 to 33 lie on the Cytoplasmic side of the membrane; it reads MGRIGISCLFPASWHFSISPVGCPRILNTNLRQ. A helical transmembrane segment spans residues 34-54; the sequence is IMVISVLAAAVSLLYFSVVII. The Lumenal segment spans residues 55–559; it reads RNKYGRLTRD…ASHTHWRGVS (505 aa). Glutamate 222 (proton acceptor) is an active-site residue. An intrachain disulfide couples cysteine 368 to cysteine 395. Asparagine 404 and asparagine 407 each carry an N-linked (GlcNAc...) asparagine glycan. Cysteines 461 and 490 form a disulfide. Residues 560–580 traverse the membrane as a helical segment; it reads FVYNHYLFSGCFLVVLLAILL. The Cytoplasmic segment spans residues 581-616; it reads YLLRLRRIHRRTPRSSSAAALWMEEGLPAQNAPGTL.

This sequence belongs to the GDA1/CD39 NTPase family. Ca(2+) is required as a cofactor. It depends on Mg(2+) as a cofactor. As to expression, ubiquitous. Highest expression in testis and lowest in bladder.

Its subcellular location is the cytoplasmic vesicle. It is found in the autophagosome membrane. It localises to the lysosome membrane. The protein localises to the golgi apparatus membrane. It catalyses the reaction a ribonucleoside 5'-diphosphate + H2O = a ribonucleoside 5'-phosphate + phosphate + H(+). The catalysed reaction is a ribonucleoside 5'-triphosphate + H2O = a ribonucleoside 5'-diphosphate + phosphate + H(+). It carries out the reaction UDP + H2O = UMP + phosphate + H(+). The enzyme catalyses UTP + H2O = UDP + phosphate + H(+). It catalyses the reaction CTP + H2O = CDP + phosphate + H(+). The catalysed reaction is GDP + H2O = GMP + phosphate + H(+). It carries out the reaction GTP + H2O = GDP + phosphate + H(+). The enzyme catalyses 5-methyl-UTP + H2O = 5-methyl-UDP + phosphate + H(+). Catalyzes the hydrolysis of nucleoside triphosphates and diphosphates in a calcium- or magnesium-dependent manner, with a preference for pyrimidines. Preferentially hydrolyzes UTP and TTP. AMP, ADP, ATP and UMP are not substrates. Preferentially activated by Ca(2+) over Mg(2+). Its function is as follows. Has a broad substrate specificity with the ability of cleaving all nucleotide di- and triphosphates with the exception of adenosine di- and triphosphate (ADP and ATP). Preferentially hydrolyzes CTP, UDP, CDP, GTP and GDP. Can use either Ca(2+) or Mg(2+) equally. This chain is Ectonucleoside triphosphate diphosphohydrolase 4, found in Homo sapiens (Human).